Here is a 172-residue protein sequence, read N- to C-terminus: Transcriptional activator protein (172 aa).

The Nuclear localization signal motif lies at Lys-56 to Arg-71. A zinc finger lies at Cys-76–His-93. A disordered region spans residues Asp-119–Lys-172. Over residues Asn-137–Ser-152 the composition is skewed to polar residues. The tract at residues Ser-158 to Lys-172 is transactivation.

This sequence belongs to the geminiviridae transcriptional activator protein family. Monomer. Homodimer. Homooligomer. Self-interaction correlates with nuclear localization and efficient activation of transcription. Monomers suppress local silencing by interacting with and inactivating host adenosine kinase 2 (ADK2) in the cytoplasm. Interacts with and inhibits host SNF1 kinase. Binds to ssDNA. Phosphorylated.

It localises to the host nucleus. It is found in the host cytoplasm. In terms of biological role, strong activator of the late viral genes promoters. Enhances the expression of the capsid protein and nuclear shuttle protein. Acts as a suppressor of RNA-mediated gene silencing, also known as post-transcriptional gene silencing (PTGS), a mechanism of plant viral defense that limits the accumulation of viral RNAs. Suppresses the host RNA silencing by inhibiting adenosine kinase 2 (ADK2), a kinase involved in a general methylation pathway. Also suppresses the host basal defense by interacting with and inhibiting SNF1 kinase, a key regulator of cell metabolism implicated in innate antiviral defense. Determines pathogenicity. The chain is Transcriptional activator protein from Bean golden yellow mosaic virus (isolate Puerto Rico) (BGYMV).